A 413-amino-acid polypeptide reads, in one-letter code: Serine hydroxymethyltransferase (413 aa).

(6S)-5,6,7,8-tetrahydrofolate is bound by residues L119 and 123-125; that span reads GHL. Residue K228 is modified to N6-(pyridoxal phosphate)lysine. (6S)-5,6,7,8-tetrahydrofolate is bound at residue 351 to 353; sequence SPF.

Belongs to the SHMT family. As to quaternary structure, homodimer. Requires pyridoxal 5'-phosphate as cofactor.

It localises to the cytoplasm. The catalysed reaction is (6R)-5,10-methylene-5,6,7,8-tetrahydrofolate + glycine + H2O = (6S)-5,6,7,8-tetrahydrofolate + L-serine. It functions in the pathway one-carbon metabolism; tetrahydrofolate interconversion. It participates in amino-acid biosynthesis; glycine biosynthesis; glycine from L-serine: step 1/1. In terms of biological role, catalyzes the reversible interconversion of serine and glycine with tetrahydrofolate (THF) serving as the one-carbon carrier. This reaction serves as the major source of one-carbon groups required for the biosynthesis of purines, thymidylate, methionine, and other important biomolecules. Also exhibits THF-independent aldolase activity toward beta-hydroxyamino acids, producing glycine and aldehydes, via a retro-aldol mechanism. The chain is Serine hydroxymethyltransferase from Clostridium botulinum (strain ATCC 19397 / Type A).